Consider the following 106-residue polypeptide: Nucleoid-associated protein Rpal_0620 (106 aa).

This sequence belongs to the YbaB/EbfC family. As to quaternary structure, homodimer.

Its subcellular location is the cytoplasm. The protein localises to the nucleoid. Its function is as follows. Binds to DNA and alters its conformation. May be involved in regulation of gene expression, nucleoid organization and DNA protection. The polypeptide is Nucleoid-associated protein Rpal_0620 (Rhodopseudomonas palustris (strain TIE-1)).